The sequence spans 427 residues: MVGSIFGWLGLLFAGMPVGFSLIFVALAFLILTNSTGINFAAQQMLGGIDNFTLLAVPFFVLTGHLMNSAGITERIFNFAKSLVGHITGSLGHVNIMASLLFSGMSGSALADAGGLGQLEIKSMRDAKYHDDFAGGLTAASCIIGPLVPPSVPLVIYGVVSNTSIGALFLAGAIPGLLCCIALMVMSYFICKKRGYMTLPKASRREQFKSLKEAFLSLLTPVIIIGGIFSGKFTPTEAAAVSSLYALFLGTVVYNTLTLQGFIEILKETVNTTAVVALMVMGVTVFGWIVAREQLPQMLADYFLTISDNPLVLLLLINLLLLFLGTFIESLALLLLLVPFLVPVASAVGIDPVHFGVMAILNLMIGILTPPMGMALYVVSRVGDIPFHTLTRGVLPLLVPLFIVLALVAVFPQFTLLLPELFLGYGQ.

12 consecutive transmembrane segments (helical) span residues 11-31 (LLFAGMPVGFSLIFVALAFLI), 52-72 (FTLLAVPFFVLTGHLMNSAGI), 82-102 (SLVGHITGSLGHVNIMASLLF), 140-160 (ASCIIGPLVPPSVPLVIYGVV), 165-185 (IGALFLAGAIPGLLCCIALMV), 214-234 (AFLSLLTPVIIIGGIFSGKFT), 246-266 (ALFLGTVVYNTLTLQGFIEIL), 270-290 (VNTTAVVALMVMGVTVFGWIV), 301-321 (DYFLTISDNPLVLLLLINLLL), 322-342 (LFLGTFIESLALLLLLVPFLV), 348-368 (VGIDPVHFGVMAILNLMIGIL), and 394-414 (VLPLLVPLFIVLALVAVFPQF).

The protein belongs to the TRAP transporter large permease family. The complex comprises the extracytoplasmic solute receptor protein SiaP, and the two transmembrane proteins SiaQ and SiaM. SiaQ and SiaM form a tight 1:1 complex.

It localises to the cell inner membrane. Part of the tripartite ATP-independent periplasmic (TRAP) transport system SiaPQM that catalyzes unidirectional Na(+)-dependent sialic acid uptake. The protein is Sialic acid TRAP transporter large permease protein SiaM of Vibrio cholerae serotype O1 (strain ATCC 39315 / El Tor Inaba N16961).